A 4061-amino-acid polypeptide reads, in one-letter code: MTKIQEQEPIAVIGMACRFPGGSDTPSKLWELLQKPRDLSKRVPEDRFDSTGFFHENGTHHGATDCRDAYFLEEDVTRFDNAFFNIQPGEAEALDPQQRLLMETVYESLCTAGQTVEGLRGSRTAMYVGLMCDDWSQMTSRDWDLVPTYTATGTSRAVMSNRISYFFDWHGPSMTVDTACSSSLVAVHQGVTSLRNGEAPIAVAAGANLILAPGMWIAESNLHMLSPTGTSKMWDAAADGYARGEGIAAVVLKPLSAALRDGDNIDCIIRETGVNQDGRTAGLTMPSNTAQSQLIRDTYRRAGLDINDPKDRPQFFHAHGTGTPAGDPQEAEAISRAFFDKSDVKDPLYVGSIKTVIGQADIVGWWDSPPPPNRHTEGTAGLASLIGTTLAMKHGTIPQNLHFNTLSDRVAPFCAHLRVPAKSLPWPSPVTGQPRRASINSFDQWKKERTADSDFLPQIGFGGTNAHAIIEGYEPEQPPHLVTGPTTTKTSLFTPLTISATSSSSLRSMLSDLQKYLVNHPDTNLRDVAYTLQSRRSTFSYRRSVVCRSADDAVNRIEGLLVDTSAENGLNSRYADVSNPSSILGVFTGQGAQWPRMGAWLIEESPFVAQRLDELDEALATLPEGDRPDWKLSEQLLADASASRLSEAAIAQPLCTAVQVVLVDLTRAAGIHLRAVVGHSSGEIGAAYAAGFLSATDAIRVAYYRGVYAKLSRSPKDESIKGAMMAAGTSYEDALELCALEEFEGRLQVAARNSSSSVTLSGDEDAIDEVVEILKDEGRFARKLKVDTAYHSHHMQACAAPYLAALERANITAKDGNGTTWYSSVVDGQVMTKNIIQQSQYWVDNMTNAVLFAPAVTAAVAQAGPFDIAIEFGPHPALKGPCLDTVEEAAGSKIPYTGLLARQKNDVEELLAALGFLWTHLGAGSVNFDGFENAISGASSPRRLVSTLPAYPFDHSRSFYTLTRFSGGHQNMHSPLHPLLGRRCVETEADDEVSWRNILRSSENIWLQGHALQGQAVFPAMGYIAMAVEAAASLAGPDRRLGLISLEDVVIGRAMAFGDESVGMEAKVALKVSHFADDELRGKITCHSGLPHDSATPLALNFSATVNVTFHEPEAESLPAVRTDEINLANAEPQRLYSQFNKLGYNYSPPFTGVTSVHRKKGFATGTIEDISGDNWEDQLIVHPGLLDSALQTAFAAYCHPHDNRFWTLHVPTAIRSIVINPYFTDRGAGRHRQFEYQSSCRDGLESPVEADINVFAGQGQPHAFVQFESVRVQPFSVAGPQDDALIFSRFDYKLAEPDATVVVEGEGLPPPDADVIFQTIERVGFFYLRRIHETITPAEAAATLPHYKLLIEFTGRVVPRVAAGEHPTVPKEAMGDTTAYINSLLAKYRHRSDMQLIGIVGENIIPEIRRSGSMIEHMLQDGVLDRFYEEGFEYANIWIARVIAQIAHRHPRMDIFEVGAGTGGSTRAILPKLGDAFASYTFTDLSAGFFERANDRFINYADRMIYSTYNMENSPAEQGFEEGSYDVVLASNALHATGKLDETISNARRLLRPGGYLVLVEIMGNDFLGIGCSMGGLPGWWAGAAVDPTRSDGPCLNVNQWDALVRRHGFNGVETHTPLDRKLQWYAVLVCRAVDDRVVSLREPLSTTSPVPVSAADELVVVGGRTPAVASLVKESTELLKTRYTTITHIETLEEFNTTPLSQGSSVLSLTELDEQFLEVRTEAKLEALKTLWRNGRTISWVTRGARKENPHTSSMVGLARVMRYEYPHLNLQIVDYDRLPESKAIAESLLRLELGKTWESENLLWTVEPELHYVDGQLFIPRLYPYDEANKRWNTSRRTVTTEVDPHETTVVLEPSTDGNTVKPCAISPLRVRSDPPRRSSGKQITIRLQQSLLQSIKVGEAGFFTLCAGTDEESGESLVAFVDTPAESSVQVPVEWTVKTTEAADGSTALGYAATHLLAQSIIAAAVPRFGTLVVHEASSLLKDALDKEAAAEGIQVVFTTAEKTGKVDDGTVHIHQRLPARLVRKLLPRDVSVFVNLSPAPGASELLRSCLARHTATATVEDFVRIQPHISPNADIWEAGQALKTTWNAVTRHRRRTSNLEISKVISLNEANSVNPVEGPLTVVDWNTKSVEVALRPIDHGTIFRADGTYFLLGLSGELGQSLCSWMVSHGARNVVLSSRSPKVDPRYIEELAAQGANVRALACDITRRESLRACYDTIRAEMPPIIGVANGAMILEDVMFDDLEFESQERAMPPKVEGSLYLDELFYDTPLDFFVLLTSLAHIGGNTGQSTYVMANLFMVALAAQRRDIRGVVGSDMAIGSVTGMGFFERSALDKDHFSRMGYRNMSEQDLHTQFAEAILAGKPGAKGIPEVAIGLQPYRDTPNIQAQLRMDPRFKHYLLQDRGANTQGQAGGSQGNAKPRVRLASVTTRAEAIKVVFDTFVDRLKRILLMSATEVIDPMVSLVELGADSIMAVDVRGWFLKELDVDVPVLKILGPGETIALLVEEAVDKLPVDIVDISKLEHGGEPDLTQTAPAPKPEPVRQPELPPQPTSAASSSDTGSDSSPTSNSVSETQTGTPLETPMSTTEAGYFKQESQQLQQKLQKHQEQTSQSWRQKVVESSTEHTEQMTFGQNRFWFLTHYVDDPTTFNIAYVGKLTGRIRVDDLSKAVQAAAQRHESLRTRFFWSDDDTKTPMQGILSNTLVRLETATIKSAAEAAQELDEMRAYVWDLGDWVPLRMRLLSLSDTEHFLLIGTHHISMDGHSFSVLMLDIQQAYNSPGQRLAPLPVASQARAFGAHQRLSYETGKFKTAIEHHRSQLPAADLVRPIELFSFARTQVRPALDHYGTHVAKTHLPLATAAKLKQLARGHRATAFHAYLAGLQALLFRLLPAATTDKVFVGLADANRLDSKFMGSIGNFLNVLPVRFDRADRQTFGQAMEVARDRAYGGLKHSALPFDLLLDELEVPRSNAWAPVFQIFMDYRLVVKEHANKDWIGCKISEENWHTSRSGYDVALEIMEGHDGAMVAMHVQKALYDASAADLLLKTYVNVLNQVAAKGDKFVVKELATWDTESEQKGLATGHGPNLTLEWPATVAHRIDQVIADHPDAVALKDGHGRSLTYKEMDERVESIAHTLREHVPRTDKQPIVGVLQTPSADWMCSLLAILRFGGIYLPLDLRNGAPRLKSNVDAARPVAVLTDASSAGQVTDVCHHSDVVVINVSHLPASTGLPRMETTAATADGSAYIIFTSGSTGEPKGIVVKHSGLRANLEGYHREWAIDTMSDVVLQQTALSFDASLVQIFAALTTGGSLFVVPADARGDPSEVTKLMVENGVTMTQATPSEYDMWFRFAPETLHRCSTWKAAWFGGERAGPSVLDGFRKACRAIPSLRVFTSYGPTESTISAMKGEADVRNPDLRVPVPGRLLPNYAAYIVDDTLQPVPTGVPGEIVLGGAGVGANEYLNQKDMTDKQFPRDKFTSRGDSGWGRMYRTGDYGRLDARGYLTVEGRIAGDTQVKLRGFRIELAEIERVMVKEADGTISDAVVTLRGEGEQEGFLAAHVVFNGKIQGDKETGEAVDKLRARLPLCLPQYMCPAVIVPLDSLPLTSHHKVDRKALQTLELPKVEASVAEQLQNLTATERTLADLWDSLLPPRAAADALGPRSHFFSSGGNSLLLVKLQAAIKRDFGDAPRLSKLMSAPELGSMAALLDDGVGRVNWDKEIALDDELHGASWRARVTPAGADGISVLITGATGSLGRRITQRLANDNRVSRVVCLVRPVDGRDMANVFPGIGDKVQIMPADLPTLPADSDIPDIDVVLHCAADRNFWDGYHAVKPVNVDTAKALARLCLRRGATLHVLSSGAMAAYEGDDKTPGGSLPRPTPDDGYLSSKWVAERYLAGVARETGLPLTAHRPTRVSDAEALRVEQMGKTEMGMAKIMLSLSEKLNVRPDFTNLGGIIDLSPLEDAVEAVTQAVTTNIREEASGIRIINHAGTARMRTNALAAHAEELFGRAENSAVMGLPSVSALHWVGLAKRAGLFEWFFTAQDLVVEDGEGNTIASRR.

One can recognise a Ketosynthase family 3 (KS3) domain in the interval 7-472 (QEPIAVIGMA…GTNAHAIIEG (466 aa)). The active site involves C180. The malonyl-CoA:ACP transacylase (MAT) domain stretch occupies residues 586–911 (VFTGQGAQWP…RQKNDVEELL (326 aa)). The segment at 977–1113 (HPLLGRRCVE…ATVNVTFHEP (137 aa)) is N-terminal hotdog fold. A dehydratase (DH) domain region spans residues 977–1280 (HPLLGRRCVE…VRVQPFSVAG (304 aa)). The PKS/mFAS DH domain occupies 977–1282 (HPLLGRRCVE…VQPFSVAGPQ (306 aa)). H1010 functions as the Proton acceptor; for dehydratase activity in the catalytic mechanism. The segment at 1128-1282 (LANAEPQRLY…VQPFSVAGPQ (155 aa)) is C-terminal hotdog fold. The active-site Proton donor; for dehydratase activity is D1188. Residues 1425–1619 (LDRFYEEGFE…GFNGVETHTP (195 aa)) form a methyltransferase (MT) domain region. A ketoreductase (KR) domain region spans residues 2153–2325 (TYFLLGLSGE…GVVGSDMAIG (173 aa)). In terms of domain architecture, Carrier 1 spans 2437–2516 (EAIKVVFDTF…LLVEEAVDKL (80 aa)). Position 2475 is an O-(pantetheine 4'-phosphoryl)serine (S2475). The interval 2527-2617 (EHGGEPDLTQ…QKHQEQTSQS (91 aa)) is disordered. Low complexity predominate over residues 2556 to 2576 (TSAASSSDTGSDSSPTSNSVS). Polar residues predominate over residues 2577 to 2592 (ETQTGTPLETPMSTTE). The tract at residues 2632–3077 (QMTFGQNRFW…ELATWDTESE (446 aa)) is condensation (C) domain. Residues 3103–3510 (QVIADHPDAV…RGYLTVEGRI (408 aa)) are adenylation (A) (KR) domain. A Carrier 2 domain is found at 3633-3712 (QNLTATERTL…SMAALLDDGV (80 aa)). The residue at position 3672 (S3672) is an O-(pantetheine 4'-phosphoryl)serine. Positions 3813 to 3969 (DIDVVLHCAA…LSPLEDAVEA (157 aa)) are reductase (RED) domain.

The protein in the C-terminal section; belongs to the NRP synthetase family.

The enzyme catalyses (2S,4S)-4-hydroxy-4-methylglutamate + 8 malonyl-CoA + 3 S-adenosyl-L-methionine + ATP + 8 NADPH + 11 H(+) = (2S)-3-[(2S)-3,5-dioxo-4-[(2E,4R,6R,8E,10E,12E)-4,6,12-trimethyltetradeca-2,8,10,12-tetraenoyl]pyrrolidin-2-yl]-2-hydroxy-2-methylpropanoate + AMP + 3 S-adenosyl-L-homocysteine + 8 CO2 + diphosphate + 8 NADP(+) + 8 CoA + 6 H2O. It participates in secondary metabolite biosynthesis. Functionally, hybrid PKS-NRPS synthetase; part of the gene cluster that mediates the biosynthesis of the tetramic acids Sch210971 and Sch210972, potential anti-HIV fungal natural product that contain a decalin core. The PKS module of tasS together with the enoylreductase tasC catalyze the formation of the polyketide unit which is then conjugated to 4-hydroxyl-4-methyl glutamate (HMG) by the condensation domain of the tasS NRPS module. One unique structural feature of Sch210971 and Sch210972 is the tetramic acid motif proposed to be derived from the non-proteinogenic amino acid HMG, by a Dieckmann-type condensation catalyzed by the reductase domain of tasS. The aldolase tasA catalyzes the aldol condensation of 2 molecules of pyruvic acid to yield the intermediate 4-hydroxyl-4-methyl-2-oxoglutarate (HMOG), which can then be stereoselectively transaminated, may be by tasG, to form HMG. The Diels-Alderase tas3 then uses the Dieckmann product of tasS as substrate and catalyzes the Diels-Alder cycloaddition to form the decalin ring of Sch210971 and Sch210972. This is Hybrid PKS-NRPS synthetase tasS from Hapsidospora irregularis.